The primary structure comprises 173 residues: Ribosome maturation factor RimM (173 aa).

The region spanning 94–168 (SNESYLCDLL…LIRINPPKGL (75 aa)) is the PRC barrel domain.

The protein belongs to the RimM family. In terms of assembly, binds ribosomal protein uS19.

It is found in the cytoplasm. Its function is as follows. An accessory protein needed during the final step in the assembly of 30S ribosomal subunit, possibly for assembly of the head region. Essential for efficient processing of 16S rRNA. May be needed both before and after RbfA during the maturation of 16S rRNA. It has affinity for free ribosomal 30S subunits but not for 70S ribosomes. The protein is Ribosome maturation factor RimM of Lawsonia intracellularis (strain PHE/MN1-00).